Consider the following 173-residue polypeptide: Signal peptidase complex catalytic subunit SEC11 (173 aa).

At 1–15 the chain is on the cytoplasmic side; that stretch reads MLGVSGMQPRQLAAQ. A helical; Signal-anchor for type II membrane protein transmembrane segment spans residues 16–36; sequence ILNFALVLSTAFMMWKGLSVV. Over 37 to 173 the chain is Lumenal; the sequence is SDSSSPIVVV…MGVMVVLQRE (137 aa). Residues serine 50, histidine 89, and aspartate 115 each act as charge relay system in the active site. The segment at 159-170 is C-terminal short (CTS) helix; that stretch reads VMLGLMGVMVVL.

Belongs to the peptidase S26B family. Component of the signal peptidase complex (SPC) composed of a catalytic subunit SEC11 and three accessory subunits SPC1, SPC2 and SPC3. The complex induces a local thinning of the ER membrane which is used to measure the length of the signal peptide (SP) h-region of protein substrates. This ensures the selectivity of the complex towards h-regions shorter than 18-20 amino acids. SPC associates with the translocon complex.

The protein resides in the endoplasmic reticulum membrane. The enzyme catalyses Cleavage of hydrophobic, N-terminal signal or leader sequences from secreted and periplasmic proteins.. In terms of biological role, catalytic component of the signal peptidase complex (SPC) which catalyzes the cleavage of N-terminal signal sequences from nascent proteins as they are translocated into the lumen of the endoplasmic reticulum. Specifically cleaves N-terminal signal peptides that contain a hydrophobic alpha-helix (h-region) shorter than 18-20 amino acids. The chain is Signal peptidase complex catalytic subunit SEC11 (SEC11) from Leptosphaeria maculans (strain JN3 / isolate v23.1.3 / race Av1-4-5-6-7-8) (Blackleg fungus).